The primary structure comprises 958 residues: DNA repair and recombination protein RDH54 (958 aa).

The tract at residues 189–217 (EALSQNMGNPSPPTTSTTETVPSTKNDGG) is disordered. Residues 202-212 (TTSTTETVPST) show a composition bias toward low complexity. The 189-residue stretch at 333–521 (LENDSDISGC…FTIIDFINPG (189 aa)) folds into the Helicase ATP-binding domain. 380–387 (IPLTGLCK) is a binding site for ATP. The short motif at 506–509 (NDLN) is the DEGH box element. Lys-649 is covalently cross-linked (Glycyl lysine isopeptide (Lys-Gly) (interchain with G-Cter in ubiquitin)). One can recognise a Helicase C-terminal domain in the interval 665–824 (KLKVLMTLLE…DSEMRNKESS (160 aa)).

It belongs to the SNF2/RAD54 helicase family. In terms of assembly, interacts with RAD51 and DMC1.

Its subcellular location is the nucleus. It catalyses the reaction ATP + H2O = ADP + phosphate + H(+). Involved in the recombinational repair of double-strand breaks (DSB) in DNA during mitosis and meiosis. Has DNA dependent ATPase activity. Promotes D-loop (displacement loop) formation with RAD51 recombinase. Modifies the topology of double-stranded DNA during the D-loop reaction to facilitate the invasion of the homologous duplex molecule by the initiating single-stranded DNA substrate. Required for adaptation from G2/M checkpoint arrest induced by a double strand break, by participating in monitoring the extent of single-stranded DNA produced by resection of DNA ends. This role is distinct from its roles in recombination. Promotes colocalization of RAD51 and DMC1 during meiotic recombination. Involved in crossover interference. This chain is DNA repair and recombination protein RDH54 (RDH54), found in Saccharomyces cerevisiae (strain ATCC 204508 / S288c) (Baker's yeast).